The chain runs to 2096 residues: HEAT repeat-containing protein 1 homolog (2096 aa).

An HEAT repeat occupies 2058 to 2096 (TVPFIAELLEDEHQRVEKNTRTGVQELETILGESVQKYL).

It belongs to the HEATR1/UTP10 family. In terms of assembly, part of the small subunit (SSU) processome, composed of more than 70 proteins and the RNA chaperone small nucleolar RNA (snoRNA) U3. Interacts with MYC; the interaction is required for localization of MYC to the nucleolus.

The protein resides in the nucleus. It localises to the nucleolus. Its function is as follows. Ribosome biogenesis factor; required for recruitment of Myc to nucleoli. Involved in nucleolar processing of pre-18S ribosomal RNA. Required for optimal pre-ribosomal RNA transcription by RNA polymerase I. Part of the small subunit (SSU) processome, first precursor of the small eukaryotic ribosomal subunit. During the assembly of the SSU processome in the nucleolus, many ribosome biogenesis factors, an RNA chaperone and ribosomal proteins associate with the nascent pre-rRNA and work in concert to generate RNA folding, modifications, rearrangements and cleavage as well as targeted degradation of pre-ribosomal RNA by the RNA exosome. Involved in neuronal-lineage cell proliferation during larval development. This Drosophila melanogaster (Fruit fly) protein is HEAT repeat-containing protein 1 homolog.